The chain runs to 66 residues: Ribosome biogenesis protein Nop10 (66 aa).

It belongs to the NOP10 family.

Involved in ribosome biogenesis; more specifically in 18S rRNA pseudouridylation and in cleavage of pre-rRNA. The polypeptide is Ribosome biogenesis protein Nop10 (Staphylothermus marinus (strain ATCC 43588 / DSM 3639 / JCM 9404 / F1)).